The following is a 509-amino-acid chain: Pituitary homeobox homolog Ptx1 (509 aa).

Residues 70–98 (NGAGSAGSAESATTTSTALSSGSTGSSTV) are compositionally biased toward low complexity. 3 disordered regions span residues 70–125 (NGAG…SSVS), 148–171 (QDLV…PKHE), and 204–273 (LNNF…HFTS). A compositionally biased stretch (polar residues) spans 227-242 (RSVNETTIKTENISSS). Residues 243 to 258 (GHDEPMTTSGEEPKND) show a composition bias toward basic and acidic residues. Residues 259–269 (KKNKRQRRQRT) are compositionally biased toward basic residues. Residues 262-322 (KRQRRQRTHF…KNRRAKWRKR (61 aa)) constitute a DNA-binding region (homeobox). Residues 460-473 (SSIATLRLKAKQHA) carry the OAR motif. The Nuclear localization signal motif lies at 464-470 (TLRLKAK).

The protein belongs to the paired homeobox family. Bicoid subfamily.

The protein resides in the nucleus. Functionally, appears to control physiological cell functions rather than pattern formation during embryogenesis. The chain is Pituitary homeobox homolog Ptx1 (Ptx1) from Drosophila melanogaster (Fruit fly).